The primary structure comprises 502 residues: Facilitated trehalose transporter Tret1 (502 aa).

Residues M1–R38 lie on the Cytoplasmic side of the membrane. A helical membrane pass occupies residues Y39–S59. Topologically, residues S60–D83 are extracellular. N73 carries an N-linked (GlcNAc...) asparagine glycan. Residues M84–G104 traverse the membrane as a helical segment. Residues P105–A120 are Cytoplasmic-facing. A helical membrane pass occupies residues L121–V141. The Extracellular portion of the chain corresponds to G142–S144. The chain crosses the membrane as a helical span at residues I145–I165. Residues Q166–S172 are Cytoplasmic-facing. The helical transmembrane segment at L173–M193 threads the bilayer. At Y194–N199 the chain is on the extracellular side. Residues L200–E220 form a helical membrane-spanning segment. Residues T221–P282 lie on the Cytoplasmic side of the membrane. Residues V283–F303 form a helical membrane-spanning segment. Over Y304 to N319 the chain is Extracellular. N319 carries an N-linked (GlcNAc...) asparagine glycan. Residues L320–I340 traverse the membrane as a helical segment. Topologically, residues D341–K346 are cytoplasmic. A helical transmembrane segment spans residues M347 to F367. Over Y368–T376 the chain is Extracellular. The helical transmembrane segment at A377–F397 threads the bilayer. At G398–P410 the chain is on the cytoplasmic side. The chain crosses the membrane as a helical span at residues V411–T433. The Extracellular segment spans residues K434–Y446. A helical membrane pass occupies residues G447 to V467. The Cytoplasmic segment spans residues P468–I502.

It belongs to the major facilitator superfamily. Sugar transporter (TC 2.A.1.1) family. Trehalose transporter subfamily.

It is found in the cell membrane. Moderate-capacity facilitative transporter for trehalose. Does not transport maltose, sucrose or lactose. Mediates the bidirectional transfer of trehalose. Responsible for the transport of trehalose synthesized in the fat body and the incorporation of trehalose into other tissues that require a carbon source, thereby regulating trehalose levels in the hemolymph. The protein is Facilitated trehalose transporter Tret1 of Apis mellifera ligustica (Common honeybee).